Here is a 270-residue protein sequence, read N- to C-terminus: Putative pyruvate, phosphate dikinase regulatory protein (270 aa).

Glycine 148–threonine 155 contributes to the ADP binding site.

The protein belongs to the pyruvate, phosphate/water dikinase regulatory protein family. PDRP subfamily.

The catalysed reaction is N(tele)-phospho-L-histidyl/L-threonyl-[pyruvate, phosphate dikinase] + ADP = N(tele)-phospho-L-histidyl/O-phospho-L-threonyl-[pyruvate, phosphate dikinase] + AMP + H(+). It carries out the reaction N(tele)-phospho-L-histidyl/O-phospho-L-threonyl-[pyruvate, phosphate dikinase] + phosphate + H(+) = N(tele)-phospho-L-histidyl/L-threonyl-[pyruvate, phosphate dikinase] + diphosphate. Functionally, bifunctional serine/threonine kinase and phosphorylase involved in the regulation of the pyruvate, phosphate dikinase (PPDK) by catalyzing its phosphorylation/dephosphorylation. The sequence is that of Putative pyruvate, phosphate dikinase regulatory protein from Bacillus cereus (strain B4264).